Here is a 185-residue protein sequence, read N- to C-terminus: Large ribosomal subunit protein uL5 (185 aa).

This sequence belongs to the universal ribosomal protein uL5 family. Part of the 50S ribosomal subunit; part of the 5S rRNA/L5/L18/L25 subcomplex. Contacts the 5S rRNA and the P site tRNA. Forms a bridge to the 30S subunit in the 70S ribosome.

This is one of the proteins that bind and probably mediate the attachment of the 5S RNA into the large ribosomal subunit, where it forms part of the central protuberance. In the 70S ribosome it contacts protein S13 of the 30S subunit (bridge B1b), connecting the 2 subunits; this bridge is implicated in subunit movement. Contacts the P site tRNA; the 5S rRNA and some of its associated proteins might help stabilize positioning of ribosome-bound tRNAs. The sequence is that of Large ribosomal subunit protein uL5 from Streptomyces avermitilis (strain ATCC 31267 / DSM 46492 / JCM 5070 / NBRC 14893 / NCIMB 12804 / NRRL 8165 / MA-4680).